A 95-amino-acid chain; its full sequence is Cystatin-A2 (95 aa).

The Secondary area of contact signature appears at 47 to 51 (QLVNG).

It belongs to the cystatin family.

The protein resides in the cytoplasm. Its function is as follows. Intracellular thiol proteinase inhibitor. Inhibits cathepsin B, but not papain. In Dictyostelium discoideum (Social amoeba), this protein is Cystatin-A2 (cpiB).